The sequence spans 653 residues: MSRFFKSAAFPILIVVVLAFFAQRLINPGDSGPRYDYSTFQQDLSEGNVKSAVVKTKGNLLEVTLKSPANQKHEVGYVPDNGNTLVGQLERERVAFDIEGTKSNGWLSLLTYVLPFLIFIGFWIFLMNQVQGGGSKVMSFGKSRARRLSVDSPKITFRDVAGADEAVEELHEIKEFLENPKKFQALGARIPKGVLLYGPPGTGKTLLARAVAGEAGVPFFSISGSDFVEMFVGVGASRVRDLFEQAKQNAPCIIFMDEIDAVGRHRGAGMGGGHDEREQTLNQLLVEMDGFEAKDNIIMIAATNRPDILDPALLRPGRFDRQVTVDRPDRKGRSKILEVHTRGKPLAREIDIDALAGQTPGFTGADLANLVNEAALLAARTGKREITQVELEEGIMRVIAGPEKKTRVMSSEERRITAYHEMGHALVGHFLEHADPVHKISVIGRGQALGYTISMPQEDKFLTTRAALGDTMAMTLGGRAAEEIIFGEITTGASNDLEKVTGTAKQMVMRFGMSEKLGPRVFGHDQSQPFLGREFSSQADYSDEIAREIDDEIRRIVETAHQSAKDILTEHRESLVYISEILIKRETIEKDQFEALVDGRTEEEVFGAEASPPPDVPLPPATERGRDTPRPLPRPGLAGGAAEMHFPERPELA.

Over 1 to 7 (MSRFFKS) the chain is Cytoplasmic. A helical membrane pass occupies residues 8 to 28 (AAFPILIVVVLAFFAQRLINP). At 29–105 (GDSGPRYDYS…FDIEGTKSNG (77 aa)) the chain is on the extracellular side. Residues 106–126 (WLSLLTYVLPFLIFIGFWIFL) form a helical membrane-spanning segment. Residues 127-653 (MNQVQGGGSK…MHFPERPELA (527 aa)) are Cytoplasmic-facing. 198–205 (GPPGTGKT) is a binding site for ATP. A Zn(2+)-binding site is contributed by H420. E421 is an active-site residue. H424 and D496 together coordinate Zn(2+). The disordered stretch occupies residues 603–653 (EEVFGAEASPPPDVPLPPATERGRDTPRPLPRPGLAGGAAEMHFPERPELA). The segment covering 611–620 (SPPPDVPLPP) has biased composition (pro residues).

It in the central section; belongs to the AAA ATPase family. In the C-terminal section; belongs to the peptidase M41 family. Homohexamer. Zn(2+) serves as cofactor.

The protein resides in the cell membrane. Its function is as follows. Acts as a processive, ATP-dependent zinc metallopeptidase for both cytoplasmic and membrane proteins. Plays a role in the quality control of integral membrane proteins. This Conexibacter woesei (strain DSM 14684 / CCUG 47730 / CIP 108061 / JCM 11494 / NBRC 100937 / ID131577) protein is ATP-dependent zinc metalloprotease FtsH 1.